Consider the following 200-residue polypeptide: NADH-quinone oxidoreductase subunit C (200 aa).

This sequence belongs to the complex I 30 kDa subunit family. In terms of assembly, NDH-1 is composed of 14 different subunits. Subunits NuoB, C, D, E, F, and G constitute the peripheral sector of the complex.

The protein localises to the cell inner membrane. It catalyses the reaction a quinone + NADH + 5 H(+)(in) = a quinol + NAD(+) + 4 H(+)(out). NDH-1 shuttles electrons from NADH, via FMN and iron-sulfur (Fe-S) centers, to quinones in the respiratory chain. The immediate electron acceptor for the enzyme in this species is believed to be ubiquinone. Couples the redox reaction to proton translocation (for every two electrons transferred, four hydrogen ions are translocated across the cytoplasmic membrane), and thus conserves the redox energy in a proton gradient. In Burkholderia cenocepacia (strain HI2424), this protein is NADH-quinone oxidoreductase subunit C.